The sequence spans 327 residues: GTPase Obg (327 aa).

The Obg domain occupies 1-159; it reads MQFIDQANII…WEVQLELKLL (159 aa). In terms of domain architecture, OBG-type G spans 160-327; sequence AEVGIIGLPN…SLLSEVWNRI (168 aa). ATP is bound by residues 166–173, 191–195, 213–216, 280–283, and 309–311; these read GLPNAGKS, FTTLI, DIPG, NKKE, and SSA. Residues Ser-173 and Thr-193 each contribute to the Mg(2+) site.

It belongs to the TRAFAC class OBG-HflX-like GTPase superfamily. OBG GTPase family. As to quaternary structure, monomer. It depends on Mg(2+) as a cofactor.

The protein localises to the cytoplasm. Its function is as follows. An essential GTPase which binds GTP, GDP and possibly (p)ppGpp with moderate affinity, with high nucleotide exchange rates and a fairly low GTP hydrolysis rate. Plays a role in control of the cell cycle, stress response, ribosome biogenesis and in those bacteria that undergo differentiation, in morphogenesis control. In Prochlorococcus marinus (strain MIT 9515), this protein is GTPase Obg.